Consider the following 312-residue polypeptide: DNA primase small subunit PriS (312 aa).

Residues Asp88, Asp90, and Asp215 contribute to the active site.

It belongs to the eukaryotic-type primase small subunit family. Heterodimer of a small subunit (PriS) and a large subunit (PriL). Mg(2+) is required as a cofactor. It depends on Mn(2+) as a cofactor.

Catalytic subunit of DNA primase, an RNA polymerase that catalyzes the synthesis of short RNA molecules used as primers for DNA polymerase during DNA replication. The small subunit contains the primase catalytic core and has DNA synthesis activity on its own. Binding to the large subunit stabilizes and modulates the activity, increasing the rate of DNA synthesis while decreasing the length of the DNA fragments, and conferring RNA synthesis capability. The DNA polymerase activity may enable DNA primase to also catalyze primer extension after primer synthesis. May also play a role in DNA repair. The chain is DNA primase small subunit PriS from Pyrobaculum arsenaticum (strain DSM 13514 / JCM 11321 / PZ6).